The following is a 143-amino-acid chain: uncharacterized protein (143 aa).

2 helical membrane passes run 16–36 and 48–68; these read LIFA…IFVW and ICYI…FIYV. N71 carries N-linked (GlcNAc...) asparagine; by host glycosylation.

The protein localises to the membrane. This is an uncharacterized protein from Acanthamoeba polyphaga (Amoeba).